A 254-amino-acid polypeptide reads, in one-letter code: Persulfide dioxygenase ETHE1, mitochondrial (254 aa).

The transit peptide at 1 to 7 directs the protein to the mitochondrion; the sequence is MAGSVLK. A phosphoserine mark is found at Ser-14 and Ser-19. Lys-32 carries the post-translational modification N6-acetyllysine; alternate. An N6-succinyllysine; alternate modification is found at Lys-32. Lys-66 carries the N6-acetyllysine modification. His-79, His-135, and Asp-154 together coordinate Fe cation.

It belongs to the metallo-beta-lactamase superfamily. Glyoxalase II family. As to quaternary structure, homodimer. Monomer. Interacts with TST. May interact with RELA. Fe(2+) serves as cofactor.

It localises to the cytoplasm. Its subcellular location is the nucleus. The protein localises to the mitochondrion matrix. The catalysed reaction is S-sulfanylglutathione + O2 + H2O = sulfite + glutathione + 2 H(+). Glutathione increases enzyme activity. Its function is as follows. Sulfur dioxygenase that plays an essential role in hydrogen sulfide catabolism in the mitochondrial matrix. Hydrogen sulfide (H(2)S) is first oxidized by SQRDL, giving rise to cysteine persulfide residues. ETHE1 consumes molecular oxygen to catalyze the oxidation of the persulfide, once it has been transferred to a thiophilic acceptor, such as glutathione (R-SSH). Plays an important role in metabolic homeostasis in mitochondria by metabolizing hydrogen sulfide and preventing the accumulation of supraphysiological H(2)S levels that have toxic effects, due to the inhibition of cytochrome c oxidase. First described as a protein that can shuttle between the nucleus and the cytoplasm and suppress p53-induced apoptosis by sequestering the transcription factor RELA/NFKB3 in the cytoplasm and preventing its accumulation in the nucleus. This is Persulfide dioxygenase ETHE1, mitochondrial (ETHE1) from Bos taurus (Bovine).